Consider the following 391-residue polypeptide: MIEAKTDPMIVSMGPHHPSMHGVLRLIVTLDGENVLDCEPVVGYLHRGMEKIAENRTIVQYLPYVTRWDYLATMFTEAITVNAPERLANIEVPRRASYLRVIMLELSRIASHLLWLGPFMADLGAQTPFFYILREREMIYDLFEAATGMRMMHNYFRVGGVAADVPYGWIDKCLDFCEYFLPKVDEYEALITRNPIFLKRVKGVGTISPQQAINWGLSGPMLRASGVSWDLRKVDRYECYEDFHWSVESEETGDCLARYLVRIREMRTSTKIVQQALKSIPGGPTENLEARQLSQGRTSPWNEFDYQFLGKKASPTFKMPRQEHYVRVEAPKGELGVFLIGDDHVFPWRWKIRPPGFINVQILPNLVQGMKLADIMTILGSIDIIMGEVDR.

This sequence belongs to the complex I 49 kDa subunit family. In terms of assembly, NDH is composed of at least 16 different subunits, 5 of which are encoded in the nucleus.

The protein localises to the plastid. It localises to the chloroplast thylakoid membrane. The enzyme catalyses a plastoquinone + NADH + (n+1) H(+)(in) = a plastoquinol + NAD(+) + n H(+)(out). It catalyses the reaction a plastoquinone + NADPH + (n+1) H(+)(in) = a plastoquinol + NADP(+) + n H(+)(out). In terms of biological role, NDH shuttles electrons from NAD(P)H:plastoquinone, via FMN and iron-sulfur (Fe-S) centers, to quinones in the photosynthetic chain and possibly in a chloroplast respiratory chain. The immediate electron acceptor for the enzyme in this species is believed to be plastoquinone. Couples the redox reaction to proton translocation, and thus conserves the redox energy in a proton gradient. This is NAD(P)H-quinone oxidoreductase subunit H, chloroplastic from Nephroselmis olivacea (Green alga).